The sequence spans 242 residues: Caffeoyl-CoA O-methyltransferase 2 (242 aa).

Lysine 16 lines the substrate pocket. S-adenosyl-L-methionine contacts are provided by residues threonine 58, glutamate 80, 82 to 83 (GV), serine 88, aspartate 106, and alanine 135. Aspartate 158 is a binding site for substrate. Position 158 (aspartate 158) interacts with a divalent metal cation. Aspartate 160 lines the S-adenosyl-L-methionine pocket. A divalent metal cation-binding residues include aspartate 184 and asparagine 185. A substrate-binding site is contributed by asparagine 189.

It belongs to the class I-like SAM-binding methyltransferase superfamily. Cation-dependent O-methyltransferase family. CCoAMT subfamily. It depends on a divalent metal cation as a cofactor. As to expression, mostly expressed in petal limbs and tubes, and, at low levels, in stems, roots and leaves.

Its subcellular location is the cytoplasm. It localises to the cytosol. The catalysed reaction is (E)-caffeoyl-CoA + S-adenosyl-L-methionine = (E)-feruloyl-CoA + S-adenosyl-L-homocysteine + H(+). It catalyses the reaction (E)-5-hydroxyferuloyl-CoA + S-adenosyl-L-methionine = (E)-sinapoyl-CoA + S-adenosyl-L-homocysteine + H(+). The protein operates within aromatic compound metabolism; phenylpropanoid biosynthesis. Its function is as follows. Involved in the production of floral volatile phenylpropanoids in flowers of fragrant cultivars (e.g. cv. Mitchell and cv. V26) from cinnamic acid, a common precursor with the anthocyanin biosynthesis pathway involved in flower pigmentation. Methylates caffeoyl-CoA to feruloyl-CoA, also able to methylate 5-hydroxyferuloyl-CoA. This chain is Caffeoyl-CoA O-methyltransferase 2, found in Petunia hybrida (Petunia).